We begin with the raw amino-acid sequence, 797 residues long: Xaa-Pro dipeptidyl-peptidase (797 aa).

Catalysis depends on charge relay system residues Ser370, Asp490, and His521.

It belongs to the peptidase S15 family. As to quaternary structure, homodimer.

It localises to the cytoplasm. It catalyses the reaction Hydrolyzes Xaa-Pro-|- bonds to release unblocked, N-terminal dipeptides from substrates including Ala-Pro-|-p-nitroanilide and (sequentially) Tyr-Pro-|-Phe-Pro-|-Gly-Pro-|-Ile.. Removes N-terminal dipeptides sequentially from polypeptides having unsubstituted N-termini provided that the penultimate residue is proline. This chain is Xaa-Pro dipeptidyl-peptidase, found in Lacticaseibacillus rhamnosus (Lactobacillus rhamnosus).